Consider the following 738-residue polypeptide: Sporulation kinase E (738 aa).

PAS domains are found at residues 29 to 99 (ELNQ…FKKG), 150 to 220 (NEQL…NRKG), 271 to 342 (SEER…YGEI), and 391 to 462 (SELK…FDEM). In terms of domain architecture, Histidine kinase spans 523–729 (GIAHEIRNPM…VFHITLPVRQ (207 aa)). At H526 the chain carries Phosphohistidine; by autocatalysis.

It catalyses the reaction ATP + protein L-histidine = ADP + protein N-phospho-L-histidine.. Its function is as follows. Phosphorylates the sporulation-regulatory protein spo0A under biofilm growth conditions. Also able to weakly phosphorylate spo0F. The chain is Sporulation kinase E (kinE) from Bacillus subtilis (strain 168).